A 451-amino-acid chain; its full sequence is Glucose-6-phosphate isomerase (451 aa).

Glu291 functions as the Proton donor in the catalytic mechanism. Residues His312 and Lys426 contribute to the active site.

Belongs to the GPI family.

The protein localises to the cytoplasm. The catalysed reaction is alpha-D-glucose 6-phosphate = beta-D-fructose 6-phosphate. Its pathway is carbohydrate biosynthesis; gluconeogenesis. The protein operates within carbohydrate degradation; glycolysis; D-glyceraldehyde 3-phosphate and glycerone phosphate from D-glucose: step 2/4. Catalyzes the reversible isomerization of glucose-6-phosphate to fructose-6-phosphate. This chain is Glucose-6-phosphate isomerase, found in Thermoanaerobacter sp. (strain X514).